The following is a 365-amino-acid chain: DNA repair protein rhp51 (365 aa).

Positions 1–25 are disordered; it reads MADTEVEMQVSAADTNNNENGQAQS. Residues 12 to 25 show a composition bias toward polar residues; sequence AADTNNNENGQAQS. 149 to 156 contributes to the ATP binding site; it reads GEFRTGKS.

This sequence belongs to the RecA family. RAD51 subfamily. Interacts with rad22, rad54, rdh54, rhp54, rti1, swi2 and swi5. Forms homooiligomers.

Its subcellular location is the nucleus. In terms of biological role, required both for recombination and for the repair of DNA damage caused by X-rays. Binds to single and double-stranded DNA, in the presence of magnesium, and exhibits DNA-dependent ATPase activity. Promotes DNA strand annealing and strand exchange via DNA recombinase activity and forms helical nucleoprotein filaments. The protein is DNA repair protein rhp51 (rhp51) of Schizosaccharomyces pombe (strain 972 / ATCC 24843) (Fission yeast).